Consider the following 894-residue polypeptide: CWF19-like protein 2 (894 aa).

Residues 1–147 (MATSMAAASG…DEKSGKDDTQ (147 aa)) form a disordered region. The span at 13–56 (ESAKSIEERKEQTRNARAEVLRQAKANFEKEERRKELKRLRGED) shows a compositional bias: basic and acidic residues. The stretch at 13 to 107 (ESAKSIEERK…KKQKYEKNNE (95 aa)) forms a coiled coil. Residue S75 is modified to Phosphoserine. Over residues 76–99 (VKKKKKKDKHSKKAKKEKKKKSKK) the composition is skewed to basic residues. A compositionally biased stretch (basic and acidic residues) spans 128 to 147 (PDKEKAWKVKDEKSGKDDTQ). Positions 166–281 (SSSSLKAEKE…AEKAASTKED (116 aa)) form a coiled coil. K171 is covalently cross-linked (Glycyl lysine isopeptide (Lys-Gly) (interchain with G-Cter in SUMO2)). The span at 270–284 (EDAEKAASTKEDYRR) shows a compositional bias: basic and acidic residues. Residues 270 to 483 (EDAEKAASTK…STFAGSPERE (214 aa)) are disordered. The segment covering 320–330 (TTDTAKNSNNE) has biased composition (polar residues). Over residues 332–352 (FIGDEKDKRPGSLETCRRESN) the composition is skewed to basic and acidic residues. 2 positions are modified to phosphoserine: S360 and S372. 2 stretches are compositionally biased toward basic and acidic residues: residues 410 to 430 (KNSE…DKKH) and 440 to 473 (TDEH…RDTK). Phosphoserine occurs at positions 479 and 484. Residues 502–530 (KAEMMGNMELAEQLKVQLEKANKFKETIT) adopt a coiled-coil conformation. Residues 561 to 583 (NTPGKSLESQGGRRKRQMVSTHE) form a disordered region. K604 participates in a covalent cross-link: Glycyl lysine isopeptide (Lys-Gly) (interchain with G-Cter in SUMO2). A coiled-coil region spans residues 644–675 (AAERERLGEEEENQRKKAIAEHRSLAAQMEKC).

The protein belongs to the CWF19 family.

This is CWF19-like protein 2 (CWF19L2) from Homo sapiens (Human).